Consider the following 1020-residue polypeptide: Carbamoyl phosphate synthase arginine-specific large chain (1020 aa).

The interval Met-1–Glu-401 is carboxyphosphate synthetic domain. The ATP site is built by Arg-129, Arg-169, Gly-175, Gly-176, Gln-208, Ile-210, Glu-215, Gly-241, Ile-242, His-243, Gln-284, and Glu-298. One can recognise an ATP-grasp 1 domain in the interval Lys-133–Ile-327. The Mg(2+) site is built by Gln-284, Glu-298, and Asn-300. Positions 284, 298, and 300 each coordinate Mn(2+). Oligomerization domain regions lie at residues Ile-402–Thr-542 and Ile-402–Glu-544. Carbamoyl phosphate synthetic domain regions lie at residues Asn-543–Tyr-927 and Glu-544–Tyr-927. Residues Ala-669 to Leu-858 enclose the ATP-grasp 2 domain. Positions 705, 744, 746, 750, 775, 776, 777, 778, and 818 each coordinate ATP. The Mg(2+) site is built by Gln-818 and Asn-831. Mn(2+) is bound by residues Gln-818 and Asn-831. The region spanning Tyr-927–Ile-1020 is the MGS-like domain. An allosteric domain region spans residues His-928–Ile-1020.

This sequence belongs to the CarB family. As to quaternary structure, composed of two chains; the small (or glutamine) chain promotes the hydrolysis of glutamine to ammonia, which is used by the large (or ammonia) chain to synthesize carbamoyl phosphate. Tetramer of heterodimers (alpha,beta)4. The cofactor is Mg(2+). Requires Mn(2+) as cofactor.

The catalysed reaction is hydrogencarbonate + L-glutamine + 2 ATP + H2O = carbamoyl phosphate + L-glutamate + 2 ADP + phosphate + 2 H(+). It catalyses the reaction hydrogencarbonate + NH4(+) + 2 ATP = carbamoyl phosphate + 2 ADP + phosphate + 2 H(+). Its pathway is amino-acid biosynthesis; L-arginine biosynthesis; carbamoyl phosphate from bicarbonate: step 1/1. Large subunit of the glutamine-dependent carbamoyl phosphate synthetase (CPSase). CPSase catalyzes the formation of carbamoyl phosphate from the ammonia moiety of glutamine, carbonate, and phosphate donated by ATP, constituting the first step of the biosynthetic pathway leading to arginine and/or urea. The large subunit (synthetase) binds the substrates ammonia (free or transferred from glutamine from the small subunit), hydrogencarbonate and ATP and carries out an ATP-coupled ligase reaction, activating hydrogencarbonate by forming carboxy phosphate which reacts with ammonia to form carbamoyl phosphate. The chain is Carbamoyl phosphate synthase arginine-specific large chain from Lactiplantibacillus plantarum (strain ATCC BAA-793 / NCIMB 8826 / WCFS1) (Lactobacillus plantarum).